Consider the following 285-residue polypeptide: K88 fimbrial protein AB (285 aa).

The signal sequence occupies residues Met-1–Ala-21.

The protein belongs to the fimbrial K88 protein family. K88 fimbria, 0.1-1 micrometer in length and 7 nanometers in diameter, is composed of about 100 identical subunits.

The protein localises to the fimbrium. Functionally, K88 major fimbrial subunit. Fimbriae (also called pili), are polar filaments radiating from the surface of the bacterium to a length of 0.5-1.5 micrometers and numbering 100-300 per cell. They enable bacteria to colonize the epithelium of specific host organs. The polypeptide is K88 fimbrial protein AB (faeG) (Escherichia coli).